A 176-amino-acid polypeptide reads, in one-letter code: MVTIALGSRNPVKINATKEALDVLKLNWDLIGIEVDNGVDKQPFCDQTYVGARNRALNVIRVTNADIGLGIEGGVCNVYGKFIANAVVYVITKEGLENFAISSSFTLPSSMVSLILQGKELGEASDIIFKTNNSKTKEGAIGLLTNNVINRKMLYVQPIVLALYPIYNTMINNTPF.

Asp-36 is a Mg(2+) binding site.

Belongs to the YjjX NTPase family. Homodimer. Mg(2+) is required as a cofactor. Mn(2+) serves as cofactor.

The enzyme catalyses XTP + H2O = XDP + phosphate + H(+). The catalysed reaction is ITP + H2O = IDP + phosphate + H(+). Its function is as follows. Phosphatase that hydrolyzes non-canonical purine nucleotides such as XTP and ITP to their respective diphosphate derivatives. Probably excludes non-canonical purines from DNA/RNA precursor pool, thus preventing their incorporation into DNA/RNA and avoiding chromosomal lesions. The sequence is that of Probable inosine/xanthosine triphosphatase from Saccharolobus islandicus (strain M.14.25 / Kamchatka #1) (Sulfolobus islandicus).